Consider the following 417-residue polypeptide: Imidazolonepropionase (417 aa).

2 residues coordinate Fe(3+): H77 and H79. The Zn(2+) site is built by H77 and H79. Positions 86, 149, and 182 each coordinate 4-imidazolone-5-propanoate. N-formimidoyl-L-glutamate is bound at residue Y149. Fe(3+) is bound at residue H247. H247 provides a ligand contact to Zn(2+). Q250 contacts 4-imidazolone-5-propanoate. Position 322 (D322) interacts with Fe(3+). Residue D322 coordinates Zn(2+). Positions 324 and 326 each coordinate N-formimidoyl-L-glutamate. T327 contacts 4-imidazolone-5-propanoate.

Belongs to the metallo-dependent hydrolases superfamily. HutI family. Zn(2+) serves as cofactor. It depends on Fe(3+) as a cofactor.

The protein localises to the cytoplasm. The catalysed reaction is 4-imidazolone-5-propanoate + H2O = N-formimidoyl-L-glutamate. The protein operates within amino-acid degradation; L-histidine degradation into L-glutamate; N-formimidoyl-L-glutamate from L-histidine: step 3/3. Catalyzes the hydrolytic cleavage of the carbon-nitrogen bond in imidazolone-5-propanoate to yield N-formimidoyl-L-glutamate. It is the third step in the universal histidine degradation pathway. The protein is Imidazolonepropionase of Cupriavidus necator (strain ATCC 17699 / DSM 428 / KCTC 22496 / NCIMB 10442 / H16 / Stanier 337) (Ralstonia eutropha).